The following is a 992-amino-acid chain: Sorting nexin-19 (992 aa).

One can recognise a PXA domain in the interval glutamate 95–arginine 272. The disordered stretch occupies residues alanine 410–asparagine 442. Residues alanine 418–proline 428 are compositionally biased toward acidic residues. Residues leucine 533 to arginine 663 form the PX domain. Residues arginine 582 and arginine 629 each contribute to the a 1,2-diacyl-sn-glycero-3-phospho-(1D-myo-inositol-3-phosphate) site. 3 disordered regions span residues phenylalanine 692–arginine 726, glutamine 778–serine 797, and alanine 973–serine 992. 2 stretches are compositionally biased toward basic and acidic residues: residues threonine 709–lysine 719 and alanine 782–valine 795. The segment covering aspartate 980 to serine 992 has biased composition (polar residues).

This sequence belongs to the sorting nexin family. In terms of assembly, interacts with PTPRN.

The protein localises to the early endosome membrane. It localises to the cytoplasmic vesicle membrane. Its function is as follows. Plays a role in intracellular vesicle trafficking and exocytosis. May play a role in maintaining insulin-containing dense core vesicles in pancreatic beta-cells and in preventing their degradation. May play a role in insulin secretion. Interacts with membranes containing phosphatidylinositol 3-phosphate (PtdIns(3P)). In Homo sapiens (Human), this protein is Sorting nexin-19 (SNX19).